The primary structure comprises 152 residues: Putative toxin MJ1304 (152 aa).

Positions 15-135 constitute an HEPN domain; it reads IKRAEEDLEV…EECLKDAENV (121 aa).

In terms of biological role, putative toxin component of a putative type VII toxin-antitoxin (TA) system. Its cognate antitoxin might be MJ1305. In Methanocaldococcus jannaschii (strain ATCC 43067 / DSM 2661 / JAL-1 / JCM 10045 / NBRC 100440) (Methanococcus jannaschii), this protein is Putative toxin MJ1304.